The primary structure comprises 297 residues: MQKSKSIFIPKAFAPQQQAQAPPSKLDNKDPSVEGEGASKPKDDEYLSENVLSHINSTIEKLVKPYEIFPSEDIRPDLFALVTALEAKMEDCIRRNGDTITGPLRLLTQPAANFDVTNKEYVDWIYSIVNTRLDSKWDRNADIDMNHFKIKNIQTPQELHDAATKAYVDEKVELINNLHTIPTHHLWSKATLVGKKTWFFHPGFICPQTLHLSAIGFSTSPNKYKIGEKTKFGELNPTRLYVVVNQEIRSEHVVEKDVQIGYILKRFETPIVLEEGCNFRLMTESCLPDASVNVSFY.

Positions 1–44 (MQKSKSIFIPKAFAPQQQAQAPPSKLDNKDPSVEGEGASKPKDD) are disordered. Residues 10 to 23 (PKAFAPQQQAQAPP) show a composition bias toward low complexity. Residues 26 to 44 (LDNKDPSVEGEGASKPKDD) are compositionally biased toward basic and acidic residues.

This is an uncharacterized protein from Invertebrate iridescent virus 3 (IIV-3).